The following is a 358-amino-acid chain: Putative ankyrin repeat protein FPV242 (358 aa).

ANK repeat units lie at residues 6-35, 40-69, 91-118, 119-147, 149-177, 180-209, 214-243, 248-277, 280-312, and 316-345; these read NNYRKLRKAIINEDIEEIKYIIEKDPNMIV, NNHTLLHIAIMYRKVNAVKVLLDKGDNLVY, TRRNKISNALEKINNHKKIIEALVDKGV, ELTGLEIALSCKNIWLIKFLIEKGISVEY, GFFPVGVNYNTIDIDICKVLLENKIDINK, CGETLVRYAIRSSDLNLLKYLISKGADIEK, EQDPNIIEAVEKGNLGIVEYLIDNGISIDT, NHKPAIYYAILAGHYNMVDLLLRRGANPFI, EGNTSLISVATQAKRNRLKLINLLLKYGVRLPG, and YYIQPILLDYSYETYNIIHILLEHGLRITS.

This chain is Putative ankyrin repeat protein FPV242, found in Fowlpox virus (strain NVSL) (FPV).